Reading from the N-terminus, the 264-residue chain is Intermembrane phospholipid transport system ATP-binding protein MlaF (264 aa).

One can recognise an ABC transporter domain in the interval 6 to 242 (IEVKNLTFKR…QDLRVVQFLK (237 aa)). An ATP-binding site is contributed by 38-45 (GPSGIGKT).

It belongs to the ABC transporter superfamily. MlaF family. The complex is composed of two ATP-binding proteins (MlaF), two transmembrane proteins (MlaE), two cytoplasmic solute-binding proteins (MlaB) and six periplasmic solute-binding proteins (MlaD).

It is found in the cell inner membrane. Its function is as follows. Part of the ABC transporter complex MlaFEDB, which is involved in a phospholipid transport pathway that maintains lipid asymmetry in the outer membrane by retrograde trafficking of phospholipids from the outer membrane to the inner membrane. Responsible for energy coupling to the transport system. The sequence is that of Intermembrane phospholipid transport system ATP-binding protein MlaF from Haemophilus influenzae (strain ATCC 51907 / DSM 11121 / KW20 / Rd).